The sequence spans 214 residues: Oxaloacetate tautomerase fahd-1, mitochondrial (214 aa).

Mg(2+) contacts are provided by Glu65, Glu67, and Asp96.

Belongs to the FAH family. Mg(2+) serves as cofactor. Requires Mn(2+) as cofactor. Widely expressed.

The protein resides in the mitochondrion. It catalyses the reaction oxaloacetate = enol-oxaloacetate. Its function is as follows. Tautomerase that converts enol-oxaloacetate, a strong inhibitor of succinate dehydrogenase, to the physiological keto form of oxaloacetate. The chain is Oxaloacetate tautomerase fahd-1, mitochondrial from Caenorhabditis elegans.